Reading from the N-terminus, the 138-residue chain is Thyrotropin subunit beta (138 aa).

Positions 1–20 (MTAIYLMSMLFGLACGQAMS) are cleaved as a signal peptide. 6 disulfides stabilise this stretch: cysteine 22/cysteine 72, cysteine 36/cysteine 87, cysteine 39/cysteine 125, cysteine 47/cysteine 103, cysteine 51/cysteine 105, and cysteine 108/cysteine 115. The N-linked (GlcNAc...) asparagine glycan is linked to asparagine 43. The propeptide occupies 133 to 138 (VVGFSI).

This sequence belongs to the glycoprotein hormones subunit beta family. In terms of assembly, heterodimer of a common alpha chain and a unique beta chain which confers biological specificity to thyrotropin, lutropin, follitropin and gonadotropin.

It localises to the secreted. Functionally, indispensable for the control of thyroid structure and metabolism. The polypeptide is Thyrotropin subunit beta (TSHB) (Canis lupus familiaris (Dog)).